The primary structure comprises 432 residues: 3-phosphoshikimate 1-carboxyvinyltransferase (432 aa).

3-phosphoshikimate is bound by residues Lys22, Ser23, and Arg27. Lys22 is a phosphoenolpyruvate binding site. Phosphoenolpyruvate is bound by residues Gly96 and Arg127. Residues Ser173, Ser174, Gln175, Ser201, Asp316, Asn339, and Lys343 each contribute to the 3-phosphoshikimate site. Gln175 contacts phosphoenolpyruvate. Asp316 functions as the Proton acceptor in the catalytic mechanism. Phosphoenolpyruvate-binding residues include Arg347, Arg391, and Lys416.

Belongs to the EPSP synthase family. Monomer.

The protein localises to the cytoplasm. The enzyme catalyses 3-phosphoshikimate + phosphoenolpyruvate = 5-O-(1-carboxyvinyl)-3-phosphoshikimate + phosphate. It participates in metabolic intermediate biosynthesis; chorismate biosynthesis; chorismate from D-erythrose 4-phosphate and phosphoenolpyruvate: step 6/7. Functionally, catalyzes the transfer of the enolpyruvyl moiety of phosphoenolpyruvate (PEP) to the 5-hydroxyl of shikimate-3-phosphate (S3P) to produce enolpyruvyl shikimate-3-phosphate and inorganic phosphate. The sequence is that of 3-phosphoshikimate 1-carboxyvinyltransferase from Histophilus somni (strain 2336) (Haemophilus somnus).